We begin with the raw amino-acid sequence, 30 residues long: Trypsin inhibitor 3 (30 aa).

Intrachain disulfides connect C4-C21, C11-C23, and C17-C29.

It belongs to the protease inhibitor I7 (squash-type serine protease inhibitor) family.

The protein localises to the secreted. Inhibits trypsin. This chain is Trypsin inhibitor 3, found in Momordica charantia (Bitter gourd).